A 187-amino-acid chain; its full sequence is Probable chorismate pyruvate-lyase (187 aa).

Residues Arg-77, Leu-115, and Glu-174 each contribute to the substrate site.

The protein belongs to the UbiC family.

The protein resides in the cytoplasm. It carries out the reaction chorismate = 4-hydroxybenzoate + pyruvate. It functions in the pathway cofactor biosynthesis; ubiquinone biosynthesis. Functionally, removes the pyruvyl group from chorismate, with concomitant aromatization of the ring, to provide 4-hydroxybenzoate (4HB) for the ubiquinone pathway. The protein is Probable chorismate pyruvate-lyase of Shewanella sp. (strain ANA-3).